Here is a 137-residue protein sequence, read N- to C-terminus: NADH-quinone oxidoreductase subunit A (137 aa).

Transmembrane regions (helical) follow at residues 12-32 (WGFA…LGLS), 66-86 (FYLV…LFAW), and 95-115 (WTGF…LVYL).

This sequence belongs to the complex I subunit 3 family. As to quaternary structure, NDH-1 is composed of 13 different subunits. Subunits NuoA, H, J, K, L, M, N constitute the membrane sector of the complex.

It is found in the cell inner membrane. It catalyses the reaction a quinone + NADH + 5 H(+)(in) = a quinol + NAD(+) + 4 H(+)(out). Its function is as follows. NDH-1 shuttles electrons from NADH, via FMN and iron-sulfur (Fe-S) centers, to quinones in the respiratory chain. The immediate electron acceptor for the enzyme in this species is believed to be ubiquinone. Couples the redox reaction to proton translocation (for every two electrons transferred, four hydrogen ions are translocated across the cytoplasmic membrane), and thus conserves the redox energy in a proton gradient. This Pseudomonas putida (strain ATCC 700007 / DSM 6899 / JCM 31910 / BCRC 17059 / LMG 24140 / F1) protein is NADH-quinone oxidoreductase subunit A.